The following is a 310-amino-acid chain: Zinc finger protein 346 (310 aa).

At methionine 1 the chain carries N-acetylmethionine. A compositionally biased stretch (low complexity) spans 1-12; it reads MEYPAPAAVQAA. The segment at 1 to 33 is disordered; the sequence is MEYPAPAAVQAADGGGAGPYNSSELLEGQEPDG. Residues 70 to 104 form a Matrin-type 1 zinc finger; the sequence is FTNTQCKVCCALLISESQKLAHYQSKKHANKVKRY. 4 residues coordinate Zn(2+): cysteine 75, cysteine 78, histidine 91, and histidine 97. A Glycyl lysine isopeptide (Lys-Gly) (interchain with G-Cter in SUMO2) cross-link involves residue lysine 114. A Matrin-type 2 zinc finger spans residues 131-165; sequence DKNQCCPICNMTFSSPVVAQSHYLGKTHAKNLKLK. Zn(2+) is bound by residues cysteine 136, cysteine 139, histidine 152, and histidine 158. Lysine 170 participates in a covalent cross-link: Glycyl lysine isopeptide (Lys-Gly) (interchain with G-Cter in SUMO2). 2 Matrin-type zinc fingers span residues 198 to 232 and 252 to 286; these read DPDK…ETKL and GKGY…SPKT. The tract at residues 278-310 is disordered; it reads KHKNQSPKTVASSLGQIPMQRQPIQKDSTTLED. Composition is skewed to polar residues over residues 283-292 and 299-310; these read SPKTVASSLG and QPIQKDSTTLED.

As to quaternary structure, forms a heteromeric complex with XPO5 and ILF3. Found in a nuclear export complex with XPO5, RAN, ILF3, ZNF346 and double-stranded RNA. Interacts with XPO5. Interacts with ILF3 in an RNA-independent manner.

It is found in the nucleus. Its subcellular location is the nucleolus. The protein localises to the cytoplasm. Functionally, binds with low affinity to dsDNA and ssRNA, and with high affinity to dsRNA, with no detectable sequence specificity. In Pongo abelii (Sumatran orangutan), this protein is Zinc finger protein 346 (ZNF346).